The sequence spans 230 residues: Orotidine 5'-phosphate decarboxylase (230 aa).

Substrate is bound by residues Asp10, Lys32, Asp59–Thr68, Thr119, Arg180, Gln189, Gly209, and Arg210. Lys61 acts as the Proton donor in catalysis.

Belongs to the OMP decarboxylase family. Type 1 subfamily. As to quaternary structure, homodimer.

It catalyses the reaction orotidine 5'-phosphate + H(+) = UMP + CO2. It participates in pyrimidine metabolism; UMP biosynthesis via de novo pathway; UMP from orotate: step 2/2. Catalyzes the decarboxylation of orotidine 5'-monophosphate (OMP) to uridine 5'-monophosphate (UMP). This is Orotidine 5'-phosphate decarboxylase from Haemophilus influenzae (strain 86-028NP).